A 290-amino-acid polypeptide reads, in one-letter code: Fructose-1,6-bisphosphatase class 1 (290 aa).

Mg(2+) contacts are provided by glutamate 78, aspartate 96, leucine 98, and aspartate 99. Substrate-binding positions include 99–102 (DGSS), tyrosine 201, and lysine 226. Glutamate 232 is a binding site for Mg(2+).

It belongs to the FBPase class 1 family. As to quaternary structure, homotetramer. Mg(2+) serves as cofactor.

It is found in the cytoplasm. The enzyme catalyses beta-D-fructose 1,6-bisphosphate + H2O = beta-D-fructose 6-phosphate + phosphate. Its pathway is carbohydrate biosynthesis; gluconeogenesis. The protein is Fructose-1,6-bisphosphatase class 1 of Helicobacter pylori (strain G27).